The chain runs to 170 residues: Adenine phosphoribosyltransferase (170 aa).

It belongs to the purine/pyrimidine phosphoribosyltransferase family. In terms of assembly, homodimer.

The protein resides in the cytoplasm. It catalyses the reaction AMP + diphosphate = 5-phospho-alpha-D-ribose 1-diphosphate + adenine. It functions in the pathway purine metabolism; AMP biosynthesis via salvage pathway; AMP from adenine: step 1/1. In terms of biological role, catalyzes a salvage reaction resulting in the formation of AMP, that is energically less costly than de novo synthesis. This Thermosipho africanus (strain TCF52B) protein is Adenine phosphoribosyltransferase.